Consider the following 700-residue polypeptide: Elongation factor G (700 aa).

One can recognise a tr-type G domain in the interval 8–290 (ERYRNIGISA…AVVEFMPSPV (283 aa)). GTP-binding positions include 17-24 (AHIDAGKT), 88-92 (DTPGH), and 142-145 (NKMD).

This sequence belongs to the TRAFAC class translation factor GTPase superfamily. Classic translation factor GTPase family. EF-G/EF-2 subfamily.

It is found in the cytoplasm. Its function is as follows. Catalyzes the GTP-dependent ribosomal translocation step during translation elongation. During this step, the ribosome changes from the pre-translocational (PRE) to the post-translocational (POST) state as the newly formed A-site-bound peptidyl-tRNA and P-site-bound deacylated tRNA move to the P and E sites, respectively. Catalyzes the coordinated movement of the two tRNA molecules, the mRNA and conformational changes in the ribosome. The chain is Elongation factor G from Albidiferax ferrireducens (strain ATCC BAA-621 / DSM 15236 / T118) (Rhodoferax ferrireducens).